The chain runs to 1405 residues: DNA-directed RNA polymerase subunit beta' (1405 aa).

4 residues coordinate Zn(2+): C70, C72, C85, and C88. Mg(2+) contacts are provided by D460, D462, and D464. C814, C888, C895, and C898 together coordinate Zn(2+).

This sequence belongs to the RNA polymerase beta' chain family. In terms of assembly, the RNAP catalytic core consists of 2 alpha, 1 beta, 1 beta' and 1 omega subunit. When a sigma factor is associated with the core the holoenzyme is formed, which can initiate transcription. Requires Mg(2+) as cofactor. The cofactor is Zn(2+).

It catalyses the reaction RNA(n) + a ribonucleoside 5'-triphosphate = RNA(n+1) + diphosphate. DNA-dependent RNA polymerase catalyzes the transcription of DNA into RNA using the four ribonucleoside triphosphates as substrates. This chain is DNA-directed RNA polymerase subunit beta', found in Shewanella putrefaciens (strain CN-32 / ATCC BAA-453).